Here is a 458-residue protein sequence, read N- to C-terminus: Chondroitin hydrolase (458 aa).

The N-terminal stretch at 1-22 is a signal peptide; that stretch reads MVIVWYHQLLLVLLIFIGAAKG. Residues 358-401 form the EGF-like domain; that stretch reads NLDKCRMERCEGRGECYLPRPKTNPAIYNFACRCERPYFGKSCE. Disulfide bonds link cysteine 362-cysteine 373, cysteine 367-cysteine 389, and cysteine 391-cysteine 400.

The protein belongs to the glycosyl hydrolase 56 family.

Endo-beta-galactosaminidase that specifically hydrolyzes chondroitin, releasing GlcUA-beta-(1-&gt;3)-GalNAc-beta-(1-&gt;4)-GlcUA-beta-(1-&gt;3)-GalNAc as the main product. Also hydrolyzes to a lesser extent chondroitin sulfates (CS-A, CS-C) and hyaluronic acid. May regulate the function of chondroitin in cell division. The chain is Chondroitin hydrolase from Caenorhabditis elegans.